Consider the following 219-residue polypeptide: Octanoyltransferase (219 aa).

Positions S34 to H209 constitute a BPL/LPL catalytic domain. Substrate-binding positions include R73–H80, S140–G142, and G153–A155. C171 (acyl-thioester intermediate) is an active-site residue.

The protein belongs to the LipB family.

It localises to the cytoplasm. It catalyses the reaction octanoyl-[ACP] + L-lysyl-[protein] = N(6)-octanoyl-L-lysyl-[protein] + holo-[ACP] + H(+). The protein operates within protein modification; protein lipoylation via endogenous pathway; protein N(6)-(lipoyl)lysine from octanoyl-[acyl-carrier-protein]: step 1/2. Its function is as follows. Catalyzes the transfer of endogenously produced octanoic acid from octanoyl-acyl-carrier-protein onto the lipoyl domains of lipoate-dependent enzymes. Lipoyl-ACP can also act as a substrate although octanoyl-ACP is likely to be the physiological substrate. This chain is Octanoyltransferase, found in Shewanella putrefaciens (strain CN-32 / ATCC BAA-453).